The following is an 86-amino-acid chain: Parvalbumin beta 3 (86 aa).

At Ala-1 the chain carries N-acetylalanine. The EF-hand domain maps to 35–70 (LSPEEVKKFFAIIDQDHSGFIEEEELKLFLQTFSAG). Positions 48, 50, 52, 54, 56, and 59 each coordinate Ca(2+).

It belongs to the parvalbumin family.

Its function is as follows. In muscle, parvalbumin is thought to be involved in relaxation after contraction. It binds two calcium ions. This Merluccius hubbsi (Argentine hake) protein is Parvalbumin beta 3.